Consider the following 614-residue polypeptide: Asparagine synthetase [glutamine-hydrolyzing] 3 (614 aa).

Cys2 (for GATase activity) is an active-site residue. The region spanning 2–216 is the Glutamine amidotransferase type-2 domain; that stretch reads CGITGWVDFK…PAHALTFSKD (215 aa). L-glutamine contacts are provided by residues 50–54, 77–79, and Asp102; these read RLAVV and NGE. Residue 377-378 coordinates ATP; the sequence is SG.

Belongs to the asparagine synthetase family.

The catalysed reaction is L-aspartate + L-glutamine + ATP + H2O = L-asparagine + L-glutamate + AMP + diphosphate + H(+). It participates in amino-acid biosynthesis; L-asparagine biosynthesis; L-asparagine from L-aspartate (L-Gln route): step 1/1. Asparagine synthetase involved in sporulation. This Bacillus subtilis (strain 168) protein is Asparagine synthetase [glutamine-hydrolyzing] 3 (asnO).